The primary structure comprises 486 residues: V-type proton ATPase subunit B1 (486 aa).

Residue G2 is modified to N-acetylglycine.

The protein belongs to the ATPase alpha/beta chains family. As to quaternary structure, V-ATPase is a heteromultimeric enzyme composed of a peripheral catalytic V1 complex (components A to H) attached to an integral membrane V0 proton pore complex (components: a, c, c'', d and e).

The protein localises to the vacuole membrane. Its function is as follows. Non-catalytic subunit of the peripheral V1 complex of vacuolar ATPase. V-ATPase is responsible for acidifying a variety of intracellular compartments in eukaryotic cells. This chain is V-type proton ATPase subunit B1 (VHA-B1), found in Arabidopsis thaliana (Mouse-ear cress).